We begin with the raw amino-acid sequence, 278 residues long: Pantothenate synthetase (278 aa).

30 to 37 (MGFLHEGH) serves as a coordination point for ATP. The Proton donor role is filled by His-37. Gln-61 contributes to the (R)-pantoate binding site. Gln-61 provides a ligand contact to beta-alanine. 147–150 (GQKD) lines the ATP pocket. A (R)-pantoate-binding site is contributed by Gln-153. ATP-binding positions include Val-176 and 184–187 (LSSR).

This sequence belongs to the pantothenate synthetase family. Homodimer.

It localises to the cytoplasm. The catalysed reaction is (R)-pantoate + beta-alanine + ATP = (R)-pantothenate + AMP + diphosphate + H(+). The protein operates within cofactor biosynthesis; (R)-pantothenate biosynthesis; (R)-pantothenate from (R)-pantoate and beta-alanine: step 1/1. In terms of biological role, catalyzes the condensation of pantoate with beta-alanine in an ATP-dependent reaction via a pantoyl-adenylate intermediate. This is Pantothenate synthetase from Thermosipho africanus (strain TCF52B).